An 89-amino-acid polypeptide reads, in one-letter code: Small ribosomal subunit protein uS15 (89 aa).

Belongs to the universal ribosomal protein uS15 family. As to quaternary structure, part of the 30S ribosomal subunit. Forms a bridge to the 50S subunit in the 70S ribosome, contacting the 23S rRNA.

One of the primary rRNA binding proteins, it binds directly to 16S rRNA where it helps nucleate assembly of the platform of the 30S subunit by binding and bridging several RNA helices of the 16S rRNA. Its function is as follows. Forms an intersubunit bridge (bridge B4) with the 23S rRNA of the 50S subunit in the ribosome. The chain is Small ribosomal subunit protein uS15 from Halalkalibacterium halodurans (strain ATCC BAA-125 / DSM 18197 / FERM 7344 / JCM 9153 / C-125) (Bacillus halodurans).